A 141-amino-acid chain; its full sequence is Large ribosomal subunit protein bL17 (141 aa).

The protein belongs to the bacterial ribosomal protein bL17 family. As to quaternary structure, part of the 50S ribosomal subunit. Contacts protein L32.

The chain is Large ribosomal subunit protein bL17 from Gluconacetobacter diazotrophicus (strain ATCC 49037 / DSM 5601 / CCUG 37298 / CIP 103539 / LMG 7603 / PAl5).